A 565-amino-acid chain; its full sequence is MDKKTKKHRSLYIPYAGPVLLEFPLLNKGSAFSAEERSSFNLLGLLPEVVETIEEQAERAWIQYQGFKTEIDKHIYLRNIQDTNETLFYRLVQNHLEEMMPVIYTPTVGAACERFSEIYRRSRGVFISYENRHNMDDILQNVPNHNIKVIVVTDGERILGLGDQGIGGMGIPIGKLSLYTACGGISPAYTLPVVLDVGTNNQQLLTDPLYMGWRHPRVTDDEYYQFVDDFIQAVKHRWPDVLLQFEDFAQKNAMPLLNRYRDEICSFNDDIQGTAAVTAGTLIAASRAAGSQLSYQKIVFLGAGSAGCGIAEQIIAQTQREGLSEELARSRVFMVDRFGLLTDAMPNLLPFQTKLVQKRENLKNWDTDNEVLSLLDVVRNVKPDILIGVSGQTGLFTEEIIREMHKHCERPIVMPLSNPTSRVEATPQDIIVWTEGNALVATGSPFDPVIWKDKVYPIAQCNNSYIFPGIGLGVIASGASRITDEMLMSASETLAQHSPLVKNGEGLVLPELKDIHIVSRAIAFAVGKMAQQQGVAVKTSADALQQAIDENFWMPEYRSYRRTSI.

Residue Tyr-104 is the Proton donor of the active site. An NAD(+)-binding site is contributed by Arg-157. Catalysis depends on Lys-175, which acts as the Proton acceptor. Residues Glu-246, Asp-247, and Asp-270 each contribute to the a divalent metal cation site. NAD(+)-binding residues include Asp-270 and Asn-418.

It belongs to the malic enzymes family. As to quaternary structure, homotetramer. Mg(2+) serves as cofactor. The cofactor is Mn(2+).

The enzyme catalyses (S)-malate + NAD(+) = pyruvate + CO2 + NADH. It catalyses the reaction oxaloacetate + H(+) = pyruvate + CO2. The polypeptide is NAD-dependent malic enzyme (Enterobacter sp. (strain 638)).